Here is a 676-residue protein sequence, read N- to C-terminus: RNA helicase NPH-II (676 aa).

The 176-residue stretch at 172 to 347 (FSAWISHRPV…VFLPNPAFIH (176 aa)) folds into the Helicase ATP-binding domain. ATP is bound at residue 185–192 (GGTGVGKT). Positions 296-299 (DEVH) match the DEXH box motif. Residues 366 to 535 (NPSSRMAYIE…NYILYANKFN (170 aa)) form the Helicase C-terminal domain.

The protein belongs to the DEAD box helicase family. DEAH subfamily. In terms of assembly, monomer.

The protein resides in the virion. The enzyme catalyses ATP + H2O = ADP + phosphate + H(+). Functionally, NTP-dependent helicase that catalyzes unidirectional unwinding of 3'tailed duplex RNAs and plays an important role during transcription of early mRNAs, presumably by preventing R-loop formation behind the elongating RNA polymerase. Might also play a role in the export of newly synthesized mRNA chains out of the core into the cytoplasm. Required for replication and propagation of viral particles. The protein is RNA helicase NPH-II (OPG084) of Vaccinia virus (strain Copenhagen) (VACV).